Reading from the N-terminus, the 332-residue chain is CMRF35-like molecule 9 (332 aa).

A signal peptide spans M1–A18. The region spanning L19 to S121 is the Ig-like V-type domain. Over L19–R247 the chain is Extracellular. The cysteines at positions 37 and 107 are disulfide-linked. N-linked (GlcNAc...) asparagine glycosylation is present at N96. O-linked (GalNAc...) threonine glycosylation is found at T137, T143, T144, T155, T161, T170, T171, T177, T187, and T195. A disordered region spans residues L146–P239. The span at Q147 to P158 shows a compositional bias: low complexity. Low complexity predominate over residues A168–A181. A compositionally biased stretch (polar residues) spans G186–P205. A glycan (O-linked (GalNAc...) serine) is linked at S196. O-linked (GalNAc...) threonine glycosylation is found at T199 and T201. O-linked (GalNAc...) serine glycosylation is present at S202. T207 is a glycosylation site (O-linked (GalNAc...) threonine). O-linked (GalNAc...) serine glycosylation is found at S208, S213, S214, and S222. Residues L220–P239 are compositionally biased toward polar residues. T223 carries an O-linked (GalNAc...) threonine glycan. The O-linked (GalNAc...) serine glycan is linked to S224. An O-linked (GalNAc...) threonine glycan is attached at T228. S229 and S237 each carry an O-linked (GalNAc...) serine glycan. The chain crosses the membrane as a helical span at residues I248–C268. Residues S269–A332 lie on the Cytoplasmic side of the membrane.

Belongs to the CD300 family. O-glycosylated with sialylated oligosaccharides. As to expression, highly expressed in heart, skeletal muscle and placenta.

The protein resides in the apical cell membrane. It is found in the basolateral cell membrane. Its subcellular location is the endosome. It localises to the multivesicular body membrane. Receptor which may mediate L-selectin-dependent lymphocyte rollings. Binds SELL in a calcium dependent manner. Binds lymphocyte. The chain is CMRF35-like molecule 9 (CD300LG) from Homo sapiens (Human).